A 216-amino-acid polypeptide reads, in one-letter code: Large ribosomal subunit protein bL25 (216 aa).

Disordered stretches follow at residues 1–21 and 192–216; these read MAETQTLKAEAREKGSKGAVR and SADNEAKTEEAGEDKSEEKSSGKED. Residues 195–216 are compositionally biased toward basic and acidic residues; it reads NEAKTEEAGEDKSEEKSSGKED.

Belongs to the bacterial ribosomal protein bL25 family. CTC subfamily. In terms of assembly, part of the 50S ribosomal subunit; part of the 5S rRNA/L5/L18/L25 subcomplex. Contacts the 5S rRNA. Binds to the 5S rRNA independently of L5 and L18.

Functionally, this is one of the proteins that binds to the 5S RNA in the ribosome where it forms part of the central protuberance. The chain is Large ribosomal subunit protein bL25 from Parvibaculum lavamentivorans (strain DS-1 / DSM 13023 / NCIMB 13966).